A 456-amino-acid polypeptide reads, in one-letter code: Exodeoxyribonuclease 7 large subunit (456 aa).

The binds ssDNA, also required to bind the small subunit stretch occupies residues 1–103 (MLPSQSPAIF…DYQIIVESMQ (103 aa)).

Belongs to the XseA family. In terms of assembly, heterooligomer composed of two different subunits with an approximate ratio of 4:1 for small to large subunit. Also estimated to have a 6:1 ration for small to large subunits. Requires Does not require a metal cofactor. as cofactor.

The protein resides in the cytoplasm. The catalysed reaction is Exonucleolytic cleavage in either 5'- to 3'- or 3'- to 5'-direction to yield nucleoside 5'-phosphates.. Functionally, bidirectionally degrades single-stranded DNA into large acid-insoluble oligonucleotides, which are then degraded further into small acid-soluble oligonucleotides. It can degrade 3' or 5' ss regions extending from the termini of duplex DNA molecules and displaced ss regions. It can also excise thymine dimers in vitro. ssDNA-binding requires both subunits. Required for production of the mature 5'-end of retron Ec78 or Ec83 msDNA. Overproduction of this subunit in the absence of an equivalent quantity of the small subunit is toxic, causing cell elongation and chromosome fragmentation or loss; its toxicity is mostly suppressed by RecA. The chain is Exodeoxyribonuclease 7 large subunit from Escherichia coli (strain K12).